Consider the following 736-residue polypeptide: Nucleoporin nup60 (736 aa).

A disordered region spans residues 1–46; the sequence is MSSGPIRTLHKGKAARNRTPYDRIAASKDGNHSNGPQTPSKSIFQR. Residues 19-31 are compositionally biased toward basic and acidic residues; the sequence is TPYDRIAASKDGN. Positions 32-43 are enriched in polar residues; it reads HSNGPQTPSKSI. 4 positions are modified to phosphoserine: Ser157, Ser159, Ser161, and Ser162. 5 disordered regions span residues 178–210, 295–321, 338–519, 565–614, and 647–701; these read RAAAISKRESGVSSEPRARTSSLTPGNTPNSAK, DTSFTNVPTSSPLHQSTTANHPEKTPS, TPSI…PNET, AVTD…RSLF, and EQAE…FPKF. 2 stretches are compositionally biased toward polar residues: residues 196–210 and 295–314; these read RTSSLTPGNTPNSAK and DTSFTNVPTSSPLHQSTTAN. The span at 375 to 397 shows a compositional bias: basic and acidic residues; that stretch reads QIRPSSEKSEPEKKEPSAFETLE. A compositionally biased stretch (polar residues) spans 456 to 473; it reads SATTDKPSPPVSSIFSFN. 2 stretches are compositionally biased toward low complexity: residues 474–505 and 573–587; these read APSAASTKPSPAVSSTFSFNAPTTTPSATSFS and EVSSSNQASSSTMIS. Residues 588–597 show a composition bias toward polar residues; the sequence is QPNTGFSFGS. The span at 664 to 692 shows a compositional bias: basic and acidic residues; the sequence is EVEKPSAEGTNEHKQDATMTLEKTDKQGS.

Component of the nuclear pore complex (NPC). NPC constitutes the exclusive means of nucleocytoplasmic transport. NPCs allow the passive diffusion of ions and small molecules and the active, nuclear transport receptor-mediated bidirectional transport of macromolecules such as proteins, RNAs, ribonucleoparticles (RNPs), and ribosomal subunits across the nuclear envelope.

The protein localises to the nucleus. Its subcellular location is the nuclear pore complex. It is found in the nucleus membrane. In terms of biological role, functions as a component of the nuclear pore complex (NPC). NPC components, collectively referred to as nucleoporins (NUPs), can play the role of both NPC structural components and of docking or interaction partners for transiently associated nuclear transport factors. Active directional transport is assured by both, a Phe-Gly (FG) repeat affinity gradient for these transport factors across the NPC and a transport cofactor concentration gradient across the nuclear envelope. This is Nucleoporin nup60 (nup60) from Schizosaccharomyces pombe (strain 972 / ATCC 24843) (Fission yeast).